Here is a 141-residue protein sequence, read N- to C-terminus: Early nodulin-like protein 19 (141 aa).

An N-terminal signal peptide occupies residues 1–26; sequence MGRSMVLISAVVLAFLVAAPIPEVTA. The Phytocyanin domain maps to 27 to 127; that stretch reads KKYLVGDKKF…GMKLDVLVET (101 aa). Asn-42 and Asn-88 each carry an N-linked (GlcNAc...) asparagine glycan. Cysteines 80 and 115 form a disulfide.

Belongs to the early nodulin-like (ENODL) family.

In terms of biological role, may act as a carbohydrate transporter. The sequence is that of Early nodulin-like protein 19 from Arabidopsis thaliana (Mouse-ear cress).